The following is a 310-amino-acid chain: Porphobilinogen deaminase (310 aa).

Cys242 bears the S-(dipyrrolylmethanemethyl)cysteine mark.

Belongs to the HMBS family. In terms of assembly, monomer. Requires dipyrromethane as cofactor.

It carries out the reaction 4 porphobilinogen + H2O = hydroxymethylbilane + 4 NH4(+). It functions in the pathway porphyrin-containing compound metabolism; protoporphyrin-IX biosynthesis; coproporphyrinogen-III from 5-aminolevulinate: step 2/4. Functionally, tetrapolymerization of the monopyrrole PBG into the hydroxymethylbilane pre-uroporphyrinogen in several discrete steps. In Shewanella sp. (strain W3-18-1), this protein is Porphobilinogen deaminase.